We begin with the raw amino-acid sequence, 545 residues long: uncharacterized protein (545 aa).

Disordered stretches follow at residues 1 to 162 (MSSG…DPQE) and 200 to 250 (YPPV…EPPP). Over residues 86 to 100 (NYRSHSSADYLTPNS) the composition is skewed to polar residues. Composition is skewed to low complexity over residues 109–128 (TTPR…TATK) and 141–152 (SGASTSSGTSST). Composition is skewed to polar residues over residues 212 to 221 (SSRTGTLQRT) and 228 to 244 (ISST…QMQS). The PDZ domain maps to 458–540 (RVLVEKMMPG…VTITLLPAVG (83 aa)).

This is an uncharacterized protein from Caenorhabditis elegans.